A 192-amino-acid polypeptide reads, in one-letter code: MVDKEKIEIAVRMILEAIGEDPDREGLKDTPKRVARMYEEVFAGLSQDPSEHLERYFTEEHEEMVLVKDIPLYSMCEHHLLPFYGKAHVAYIPRKGKVTGLSKLARVVEGFAKRPQLQERLTSQIADAIMEKLNPRGVLVVIEAEHMCMTMRGVKKPGSKTITSAVRGIFATSVATRAEAMALIGHQSPLRD.

3 residues coordinate Zn(2+): Cys76, His79, and Cys148.

Belongs to the GTP cyclohydrolase I family. In terms of assembly, toroid-shaped homodecamer, composed of two pentamers of five dimers.

The enzyme catalyses GTP + H2O = 7,8-dihydroneopterin 3'-triphosphate + formate + H(+). It functions in the pathway cofactor biosynthesis; 7,8-dihydroneopterin triphosphate biosynthesis; 7,8-dihydroneopterin triphosphate from GTP: step 1/1. The polypeptide is GTP cyclohydrolase 1 (Carboxydothermus hydrogenoformans (strain ATCC BAA-161 / DSM 6008 / Z-2901)).